A 205-amino-acid chain; its full sequence is Pre-rRNA-processing protein TSR2 (205 aa).

Positions 144–205 (SKRVVHIEGD…LVQPKGRRKH (62 aa)) are disordered. Positions 152–177 (GDDDEDDEDVEDYDDEDEDEEMDEVV) are enriched in acidic residues.

It belongs to the TSR2 family. In terms of assembly, interacts with RPS26A.

The protein localises to the cytoplasm. It localises to the nucleus. In terms of biological role, required for 20S pre-rRNA processing. The chain is Pre-rRNA-processing protein TSR2 from Saccharomyces cerevisiae (strain ATCC 204508 / S288c) (Baker's yeast).